Here is a 271-residue protein sequence, read N- to C-terminus: Phosphonoacetaldehyde hydrolase (271 aa).

Aspartate 12 serves as the catalytic Nucleophile. The Mg(2+) site is built by aspartate 12 and alanine 14. Lysine 54 (schiff-base intermediate with substrate) is an active-site residue. Residue aspartate 188 coordinates Mg(2+).

It belongs to the HAD-like hydrolase superfamily. PhnX family. As to quaternary structure, homodimer. It depends on Mg(2+) as a cofactor.

It carries out the reaction phosphonoacetaldehyde + H2O = acetaldehyde + phosphate + H(+). In terms of biological role, involved in phosphonate degradation. This chain is Phosphonoacetaldehyde hydrolase, found in Vibrio cholerae serotype O1 (strain ATCC 39541 / Classical Ogawa 395 / O395).